The following is a 365-amino-acid chain: Putrescine 2-hydroxylase (365 aa).

In terms of domain architecture, Rieske spans 44-141; that stretch reads GHELMVPEVG…LQNWNGLLFE (98 aa). [2Fe-2S] cluster is bound by residues cysteine 81, histidine 83, cysteine 100, and histidine 103.

This sequence belongs to the bacterial ring-hydroxylating dioxygenase alpha subunit family. [2Fe-2S] cluster serves as cofactor.

Rieske-type iron sulfur protein that can catalyze in vitro the 2-hydroxylation of putrescine, forming 2-hydroxyputrescine. May be involved in the biosynthesis of the cyclic hydroxamate siderophore alcaligin. In Ralstonia nicotianae (strain ATCC BAA-1114 / GMI1000) (Ralstonia solanacearum), this protein is Putrescine 2-hydroxylase.